The following is a 401-amino-acid chain: Steroid C26-monooxygenase (401 aa).

Heme is bound at residue C343.

The protein belongs to the cytochrome P450 family. Requires heme as cofactor.

It carries out the reaction cholest-4-en-3-one + 6 reduced [2Fe-2S]-[ferredoxin] + 3 O2 + 5 H(+) = (25R)-3-oxocholest-4-en-26-oate + 6 oxidized [2Fe-2S]-[ferredoxin] + 4 H2O. The protein operates within steroid metabolism; cholesterol degradation. Functionally, involved in the utilization of cholesterol as the sole carbon and energy source by degrading the side chain. Primarily catalyzes the sequential oxidation of the terminal methyl of cholest-4-en-3-one into (25R)-26-hydroxycholest-4-en-3-one (alcohol), (25R)-26-oxocholest-4-en-3-one (aldehyde), to finally yield the carboxylic acid (25R)-3-oxocholest-4-en-26-oate. Also able to sequentially oxidize cholesterol itself, not only cholest-4-en-3-one. The protein is Steroid C26-monooxygenase of Mycolicibacterium smegmatis (strain ATCC 700084 / mc(2)155) (Mycobacterium smegmatis).